Reading from the N-terminus, the 141-residue chain is Protein C19orf12 homolog (141 aa).

Residues leucine 33–valine 53 form a helical membrane-spanning segment.

The protein belongs to the C19orf12 family.

The protein localises to the mitochondrion. It localises to the mitochondrion membrane. Its subcellular location is the endoplasmic reticulum. The protein resides in the cytoplasm. It is found in the cytosol. The protein is Protein C19orf12 homolog of Xenopus tropicalis (Western clawed frog).